We begin with the raw amino-acid sequence, 367 residues long: Glutamate 5-kinase (367 aa).

Lys-9 contacts ATP. The substrate site is built by Ser-49, Asp-136, and Asn-148. ATP is bound by residues 168 to 169 (TD) and 210 to 216 (TGGMKSK). The region spanning 276-350 (SGQIEVDAGA…GMQSQDIQVR (75 aa)) is the PUA domain.

Belongs to the glutamate 5-kinase family.

Its subcellular location is the cytoplasm. The enzyme catalyses L-glutamate + ATP = L-glutamyl 5-phosphate + ADP. The protein operates within amino-acid biosynthesis; L-proline biosynthesis; L-glutamate 5-semialdehyde from L-glutamate: step 1/2. Functionally, catalyzes the transfer of a phosphate group to glutamate to form L-glutamate 5-phosphate. The polypeptide is Glutamate 5-kinase (Bacillus cereus (strain B4264)).